The chain runs to 521 residues: Bifunctional purine biosynthesis protein PurH (521 aa).

Residues 1-145 (MIKQALISVS…KNHRDVTVVV (145 aa)) enclose the MGS-like domain.

This sequence belongs to the PurH family.

It carries out the reaction (6R)-10-formyltetrahydrofolate + 5-amino-1-(5-phospho-beta-D-ribosyl)imidazole-4-carboxamide = 5-formamido-1-(5-phospho-D-ribosyl)imidazole-4-carboxamide + (6S)-5,6,7,8-tetrahydrofolate. The catalysed reaction is IMP + H2O = 5-formamido-1-(5-phospho-D-ribosyl)imidazole-4-carboxamide. The protein operates within purine metabolism; IMP biosynthesis via de novo pathway; 5-formamido-1-(5-phospho-D-ribosyl)imidazole-4-carboxamide from 5-amino-1-(5-phospho-D-ribosyl)imidazole-4-carboxamide (10-formyl THF route): step 1/1. Its pathway is purine metabolism; IMP biosynthesis via de novo pathway; IMP from 5-formamido-1-(5-phospho-D-ribosyl)imidazole-4-carboxamide: step 1/1. This chain is Bifunctional purine biosynthesis protein PurH, found in Burkholderia ambifaria (strain MC40-6).